The chain runs to 350 residues: Serine-threonine kinase receptor-associated protein (350 aa).

7 WD repeats span residues 12–56 (GHTR…GTFL), 57–96 (GHKG…ELMT), 98–137 (AHKH…AEPK), 141–179 (GHTS…EVKS), 180–212 (LNFN…HSAV), 221–262 (EAPA…ESYK), and 263–302 (GHFG…TYGL). A phosphoserine mark is found at Ser312, Ser335, and Ser338. The interval 327–350 (EEELEEIASENSDSIYSSTPEVKA) is disordered. Residues 337 to 350 (NSDSIYSSTPEVKA) show a composition bias toward polar residues. Tyr342 bears the Phosphotyrosine mark.

Belongs to the WD repeat STRAP family. As to quaternary structure, part of the core SMN complex that contains SMN1, GEMIN2/SIP1, DDX20/GEMIN3, GEMIN4, GEMIN5, GEMIN6, GEMIN7, GEMIN8 and STRAP/UNRIP. Part of the SMN-Sm complex that contains SMN1, GEMIN2/SIP1, DDX20/GEMIN3, GEMIN4, GEMIN5, GEMIN6, GEMIN7, GEMIN8, STRAP/UNRIP and the Sm proteins SNRPB, SNRPD1, SNRPD2, SNRPD3, SNRPE, SNRPF and SNRPG. Interacts directly with GEMIN6 and GEMIN7. Associates with the SMN complex in the cytoplasm but not in the nucleus. Also interacts with CSDE1/UNR and MAWBP. Interacts with PDPK1. Interacts with TRIM48.

It is found in the cytoplasm. The protein resides in the nucleus. Functionally, the SMN complex catalyzes the assembly of small nuclear ribonucleoproteins (snRNPs), the building blocks of the spliceosome, and thereby plays an important role in the splicing of cellular pre-mRNAs. Most spliceosomal snRNPs contain a common set of Sm proteins SNRPB, SNRPD1, SNRPD2, SNRPD3, SNRPE, SNRPF and SNRPG that assemble in a heptameric protein ring on the Sm site of the small nuclear RNA to form the core snRNP (Sm core). In the cytosol, the Sm proteins SNRPD1, SNRPD2, SNRPE, SNRPF and SNRPG are trapped in an inactive 6S pICln-Sm complex by the chaperone CLNS1A that controls the assembly of the core snRNP. To assemble core snRNPs, the SMN complex accepts the trapped 5Sm proteins from CLNS1A forming an intermediate. Binding of snRNA inside 5Sm triggers eviction of the SMN complex, thereby allowing binding of SNRPD3 and SNRPB to complete assembly of the core snRNP. STRAP plays a role in the cellular distribution of the SMN complex. Negatively regulates TGF-beta signaling but positively regulates the PDPK1 kinase activity by enhancing its autophosphorylation and by significantly reducing the association of PDPK1 with 14-3-3 protein. This is Serine-threonine kinase receptor-associated protein (STRAP) from Bos taurus (Bovine).